The following is an 87-amino-acid chain: Small ribosomal subunit protein bS20 (87 aa).

Residues 1–25 (MANTAQARKRARQSVQRNKHNSSLR) are disordered. Residues 7-22 (ARKRARQSVQRNKHNS) are compositionally biased toward basic residues.

It belongs to the bacterial ribosomal protein bS20 family.

Binds directly to 16S ribosomal RNA. The sequence is that of Small ribosomal subunit protein bS20 from Bordetella bronchiseptica (strain ATCC BAA-588 / NCTC 13252 / RB50) (Alcaligenes bronchisepticus).